A 354-amino-acid chain; its full sequence is Uroporphyrinogen decarboxylase (354 aa).

Residues 27–31 (RQAGR), Asp77, Tyr154, Thr209, and His327 each bind substrate.

It belongs to the uroporphyrinogen decarboxylase family. In terms of assembly, homodimer.

The protein resides in the cytoplasm. It catalyses the reaction uroporphyrinogen III + 4 H(+) = coproporphyrinogen III + 4 CO2. The protein operates within porphyrin-containing compound metabolism; protoporphyrin-IX biosynthesis; coproporphyrinogen-III from 5-aminolevulinate: step 4/4. Its function is as follows. Catalyzes the decarboxylation of four acetate groups of uroporphyrinogen-III to yield coproporphyrinogen-III. This Edwardsiella ictaluri (strain 93-146) protein is Uroporphyrinogen decarboxylase.